The following is a 461-amino-acid chain: uncharacterized protein (461 aa).

LRR repeat units follow at residues 119-140 (NVKK…EKMS), 141-162 (LLEV…QHCK), and 163-184 (NLKE…EYLK). One can recognise an LRRCT domain in the interval 197–237 (NPCVGEGGQEYRRKVIRVLPNLTKLDDKPVTTTDHQEAIED).

This is an uncharacterized protein from Caenorhabditis elegans.